The sequence spans 257 residues: Coenzyme F420:L-glutamate ligase (257 aa).

GTP-binding positions include 9–12 (VPEV), 38–39 (ST), and K43. A divalent metal cation is bound at residue D113. Residue N116 coordinates GTP. A divalent metal cation is bound by residues D154, T155, and E212. 210–217 (TGEGDGGT) is a GTP binding site.

It belongs to the CofE family. As to quaternary structure, homodimer. Mg(2+) is required as a cofactor. Mn(2+) serves as cofactor. Requires K(+) as cofactor.

It carries out the reaction oxidized coenzyme F420-0 + GTP + L-glutamate = oxidized coenzyme F420-1 + GDP + phosphate + H(+). The catalysed reaction is oxidized coenzyme F420-1 + GTP + L-glutamate = oxidized coenzyme F420-2 + GDP + phosphate + H(+). The protein operates within cofactor biosynthesis; coenzyme F420 biosynthesis. Functionally, catalyzes the GTP-dependent successive addition of two or more gamma-linked L-glutamates to the L-lactyl phosphodiester of 7,8-didemethyl-8-hydroxy-5-deazariboflavin (F420-0) to form coenzyme F420-0-glutamyl-glutamate (F420-2) or polyglutamated F420 derivatives. This chain is Coenzyme F420:L-glutamate ligase, found in Haloarcula marismortui (strain ATCC 43049 / DSM 3752 / JCM 8966 / VKM B-1809) (Halobacterium marismortui).